A 214-amino-acid polypeptide reads, in one-letter code: Ribosomal protein uL16-like (214 aa).

This sequence belongs to the universal ribosomal protein uL16 family. Component of a male germ cell-specific 60S large ribosomal subunit (LSU), which contains RPL10L and RPL39L, instead of RPL10 and RPL39 paralogs. The composition of the rest of the complex is similar to classical ribosomes. In terms of tissue distribution, almost testis-specific. Also expressed in pre- and postmenopausal ovary.

The protein localises to the cytoplasm. In terms of biological role, testis-specific component of the ribosome, which is required for the transition from prophase to metaphase in male meiosis I. Compensates for the inactivated X-linked RPL10 paralog during spermatogenesis. The ribosome is a large ribonucleoprotein complex responsible for the synthesis of proteins in the cell. The male germ cell-specific ribosome displays a ribosomal polypeptide exit tunnel of distinct size and charge states compared with the classical ribosome. It is responsible for regulating the biosynthesis and folding of a subset of male germ-cell-specific proteins that are essential for the formation of sperm. The chain is Ribosomal protein uL16-like from Homo sapiens (Human).